Reading from the N-terminus, the 78-residue chain is uncharacterized protein (78 aa).

This is an uncharacterized protein from Escherichia coli.